Consider the following 292-residue polypeptide: Tissue factor (292 aa).

Positions 1-35 are cleaved as a signal peptide; that stretch reads MATPNGPRVPCPQAAVARALLFGLVLIQGAGVAGT. Residues 36-248 lie on the Extracellular side of the membrane; the sequence is TDVVVAYNIT…TSHEKVLSTE (213 aa). Residue N43 is glycosylated (N-linked (GlcNAc...) asparagine). Residues 46 to 48 carry the WKS motif motif; it reads WKS. Residues C81 and C89 are joined by a disulfide bond. N-linked (GlcNAc...) asparagine glycosylation is found at N153 and N181. C215 and C238 are joined by a disulfide. Residues 249 to 271 traverse the membrane as a helical segment; the sequence is LFFIIGTVMLVIIIFIVVLSVSL. The Cytoplasmic segment spans residues 272–292; sequence HKCRKVRAERSGKENTPLNAA. A lipid anchor (S-palmitoyl cysteine) is attached at C274.

This sequence belongs to the tissue factor family. As to quaternary structure, interacts with HSPE; the interaction, inhibited by heparin, promotes the generation of activated factor X and activates coagulation in the presence of activated factor VII.

The protein localises to the membrane. Its function is as follows. Initiates blood coagulation by forming a complex with circulating factor VII or VIIa. The [TF:VIIa] complex activates factors IX or X by specific limited proteolysis. TF plays a role in normal hemostasis by initiating the cell-surface assembly and propagation of the coagulation protease cascade. The protein is Tissue factor (F3) of Bos taurus (Bovine).